The sequence spans 439 residues: Oocyte zinc finger protein XlCOF28 (439 aa).

C2H2-type zinc fingers lie at residues 6–28, 34–56, 62–84, 90–112, 118–140, 146–168, 174–196, 202–224, and 230–252; these read YECTECEKTFSNQSVLSLHQRTH, FKCTECEKSFMKRSQLIVHKKCH, YMCTFCEKGYNQHSKLIEHIRTH, FTCTECKKSFTKRCNLTEHLRIH, HKCNLCDKTFHYPSNLVEHQRTH, FQCTECDKSFIKMSKLMVHLRIH, YKCSECDKSFSQQSTLVVHQRTH, FQCSHCEKSFSYHYAFVVHERTH, and YKCSMCDKAYSQRSNLKLHQKTH. Disordered stretches follow at residues 246-275 and 285-304; these read KLHQKTHESKPQQDSPNCEKTFEQESAPKT and AGLEKVPELPEATNSVESPE. 4 consecutive C2H2-type zinc fingers follow at residues 333–355, 361–383, 389–411, and 417–439; these read HKCTECDKCFLEKSKLVVHQRTH, FKCSVCDKTFIRMVHLLEHRKIH, YTCAECGKSFIRMSKLTVHRRTH, and YICAECGKQFSQQSNLVVHQRIH.

The protein belongs to the krueppel C2H2-type zinc-finger protein family.

It localises to the nucleus. Its function is as follows. May be involved in transcriptional regulation. The polypeptide is Oocyte zinc finger protein XlCOF28 (Xenopus laevis (African clawed frog)).